A 518-amino-acid chain; its full sequence is Putative cytochrome P450 CYP13A7 (518 aa).

C464 provides a ligand contact to heme.

This sequence belongs to the cytochrome P450 family. Heme is required as a cofactor.

Cytochromes P450 are a group of heme-thiolate monooxygenases. They oxidize a variety of structurally unrelated compounds, including steroids, fatty acids, and xenobiotics. The polypeptide is Putative cytochrome P450 CYP13A7 (cyp-13A7) (Caenorhabditis elegans).